A 223-amino-acid polypeptide reads, in one-letter code: Uracil-DNA glycosylase (223 aa).

Aspartate 66 functions as the Proton acceptor in the catalytic mechanism.

Belongs to the uracil-DNA glycosylase (UDG) superfamily. UNG family.

It is found in the cytoplasm. The enzyme catalyses Hydrolyzes single-stranded DNA or mismatched double-stranded DNA and polynucleotides, releasing free uracil.. Its function is as follows. Excises uracil residues from the DNA which can arise as a result of misincorporation of dUMP residues by DNA polymerase or due to deamination of cytosine. This Sulfurimonas denitrificans (strain ATCC 33889 / DSM 1251) (Thiomicrospira denitrificans (strain ATCC 33889 / DSM 1251)) protein is Uracil-DNA glycosylase.